The chain runs to 499 residues: MNKFDEFIESNEKDLDVDTSTRNSIISMSPVRKTGRKIRSASSNGYRLEHHRTSSAGSMHSQRLMTPTRLNDQDHPLQAKPDARRVVTRHSSVSVPNAMSKRRSLIQPMVVPTTPESQNNLPSVSHSEGSYGIPLESTTVLSSEQAMASGLRRSRNGSSQSVNSMIATTIPTNGVDVSALLQSLATKELELLECKQKIEDLKKQTQHEEQNYTRRARELHELKEQVSKHLDPSLNTPVKNRAFSPVYQNIPLESRTENAGNSSLPSSVSKPKNMGHQSTNQSRSVSPQDIQERRQRDDSSDSSKQSLWSKPLALFNQFDKIIQHEIERTLNWDDSLSGTPEVQEGTPTSNSESSAQQYDNEAPGARQKSPSQGSVSRSLWSFVSDVKAGLLGIEEENDNDVITDNRCDPVYKSDRQHEQKKSTHKITNRGQAEDSGDDSSLNMRKFKTTTKFQKDNAGNNSLTDESGHRTREKKSKRSSNKLSFIGEPDNDNSSVQKLS.

Positions 32–62 (RKTGRKIRSASSNGYRLEHHRTSSAGSMHSQ) are disordered. A coiled-coil region spans residues 179-231 (ALLQSLATKELELLECKQKIEDLKKQTQHEEQNYTRRARELHELKEQVSKHLD). Threonine 236 is subject to Phosphothreonine. Residues serine 244 and serine 286 each carry the phosphoserine modification. Disordered stretches follow at residues 252–306 (LESR…SKQS), 332–377 (WDDS…SVSR), and 400–499 (DVIT…QKLS). Over residues 257–287 (ENAGNSSLPSSVSKPKNMGHQSTNQSRSVSP) the composition is skewed to polar residues. Positions 290 to 301 (IQERRQRDDSSD) are enriched in basic and acidic residues. 2 stretches are compositionally biased toward polar residues: residues 332–359 (WDDS…QQYD) and 368–377 (KSPSQGSVSR). Positions 403–421 (TDNRCDPVYKSDRQHEQKK) are enriched in basic and acidic residues. A compositionally biased stretch (basic residues) spans 470 to 479 (TREKKSKRSS).

It belongs to the TDA11 family.

It is found in the cytoplasm. In Saccharomyces cerevisiae (strain Zymaflore VL3) (Baker's yeast), this protein is Topoisomerase I damage affected protein 11 (TDA11).